A 3459-amino-acid polypeptide reads, in one-letter code: uncharacterized protein (3459 aa).

Residues 158-167 are compositionally biased toward acidic residues; the sequence is NDDDWIFNED. Disordered regions lie at residues 158–230 and 400–447; these read NDDD…NNNN and YGYI…NDEK. The segment covering 168-184 has biased composition (basic and acidic residues); sequence DEKKNKNNDGNDNRYDY. The span at 185 to 201 shows a compositional bias: low complexity; that stretch reads NDLQNNNNNDNNKYDYN. Positions 204-221 are enriched in basic and acidic residues; the sequence is DDEKKNKNNDGDDNKYDY. Residues 406–443 show a composition bias toward acidic residues; sequence DNDDGDDYNDDNDNDDNYNDDNYNDDNYNDDNYNDDNY. The stretch at 771–851 forms a coiled coil; that stretch reads VNEKKKGENE…NEMNKDEENE (81 aa). The chain crosses the membrane as a helical span at residues 1059–1079; that stretch reads LIYMIYLFFTYKKYDLLLMFI. 3 disordered regions span residues 1148 to 1187, 1399 to 1467, and 1711 to 1733; these read RRQE…NDYD, IPTQ…NDDD, and QKKK…NKEN. Over residues 1404 to 1463 the composition is skewed to basic and acidic residues; sequence DKNETDEGNKNETDEGDKNETDEGDKNETDEGNKNETEEIYKNETDEGNKNETEEIYKND. The next 2 helical transmembrane spans lie at 2059 to 2079 and 2197 to 2217; these read FLLF…IFFF and IIQC…DFLF. Disordered regions lie at residues 2582-2644 and 2776-2835; these read IYKD…DNNN and GRIW…DKGD. Residues 2592-2629 show a composition bias toward acidic residues; it reads DNNDDDNINDDDNINDDDNINDDDNNNDDDNNNDDNND. Residues 2779 to 2821 show a composition bias toward basic and acidic residues; that stretch reads WKREENGEKKKNEKNESEKNERNEKNEKNEKHEKHEKHEKNEK. A coiled-coil region spans residues 2785–2820; the sequence is GEKKKNEKNESEKNERNEKNEKNEKHEKHEKHEKNE. Helical transmembrane passes span 3229 to 3249 and 3296 to 3316; these read LFII…SFIL and LLFF…NINS.

The protein localises to the membrane. This is an uncharacterized protein from Plasmodium falciparum (isolate 3D7).